The chain runs to 79 residues: Dolichyl-diphosphooligosaccharide--protein glycosyltransferase subunit TMEM258 (79 aa).

A run of 2 helical transmembrane segments spans residues 19-39 and 55-75; these read PLLT…FTMI and FIAA…LLWV.

This sequence belongs to the OST5 family. Component of the oligosaccharyltransferase (OST) complex.

The protein localises to the membrane. The protein operates within protein modification; protein glycosylation. Subunit of the oligosaccharyl transferase (OST) complex that catalyzes the initial transfer of a defined glycan (Glc(3)Man(9)GlcNAc(2) in eukaryotes) from the lipid carrier dolichol-pyrophosphate to an asparagine residue within an Asn-X-Ser/Thr consensus motif in nascent polypeptide chains, the first step in protein N-glycosylation. N-glycosylation occurs cotranslationally and the complex associates with the Sec61 complex at the channel-forming translocon complex that mediates protein translocation across the endoplasmic reticulum (ER). All subunits are required for a maximal enzyme activity. The polypeptide is Dolichyl-diphosphooligosaccharide--protein glycosyltransferase subunit TMEM258 (Caenorhabditis elegans).